An 884-amino-acid polypeptide reads, in one-letter code: Probable leucine-rich repeat receptor-like protein kinase At2g28990 (884 aa).

The signal sequence occupies residues 1 to 19 (MKIHLLLAMIGTFVVIIGA). The Extracellular portion of the chain corresponds to 20 to 508 (QDQEGFISLD…TEKKNKFLLP (489 aa)). N-linked (GlcNAc...) asparagine glycans are attached at residues asparagine 70, asparagine 177, asparagine 217, asparagine 231, asparagine 251, asparagine 284, asparagine 298, asparagine 334, asparagine 418, asparagine 427, asparagine 438, asparagine 459, and asparagine 464. 3 LRR repeats span residues 404 to 427 (SPTI…ILQN), 428 to 451 (FTQL…FLAN), and 452 to 476 (MKTL…LLDK). The chain crosses the membrane as a helical span at residues 509-529 (VIASAASLVIVVVVVALFFVF). The Cytoplasmic portion of the chain corresponds to 530–884 (RKKKASPSNL…IYNEVIPQAR (355 aa)). The tract at residues 535 to 559 (SPSNLHAPPSMPVSNPGHNSQSESS) is disordered. The segment covering 546–559 (PVSNPGHNSQSESS) has biased composition (polar residues). Threonine 568 is modified (phosphothreonine). The region spanning 577–850 (NNFDKALGEG…RVVNELKECL (274 aa)) is the Protein kinase domain. ATP-binding positions include 583-591 (LGEGGFGVV) and lysine 605. Residue tyrosine 650 is modified to Phosphotyrosine. Aspartate 702 serves as the catalytic Proton acceptor. The residue at position 736 (serine 736) is a Phosphoserine. Residues threonine 737 and threonine 742 each carry the phosphothreonine modification. Tyrosine 750 carries the phosphotyrosine modification.

Belongs to the protein kinase superfamily. Ser/Thr protein kinase family. Binds to the ammonium transporter AMT1-1.

The protein localises to the membrane. It carries out the reaction L-seryl-[protein] + ATP = O-phospho-L-seryl-[protein] + ADP + H(+). It catalyses the reaction L-threonyl-[protein] + ATP = O-phospho-L-threonyl-[protein] + ADP + H(+). The polypeptide is Probable leucine-rich repeat receptor-like protein kinase At2g28990 (Arabidopsis thaliana (Mouse-ear cress)).